Reading from the N-terminus, the 516-residue chain is Nucleolar complex protein 4 homolog (516 aa).

A run of 3 helical transmembrane segments spans residues 296–316, 347–367, and 375–395; these read SACD…FILI, FFHL…LVAA, and LALT…CNLL.

This sequence belongs to the CBF/MAK21 family.

The protein localises to the nucleus membrane. Its subcellular location is the nucleus. It localises to the nucleolus. The protein is Nucleolar complex protein 4 homolog (Noc4l) of Rattus norvegicus (Rat).